The chain runs to 425 residues: Histidine--tRNA ligase 1 (425 aa).

It belongs to the class-II aminoacyl-tRNA synthetase family. Homodimer.

It is found in the cytoplasm. The enzyme catalyses tRNA(His) + L-histidine + ATP = L-histidyl-tRNA(His) + AMP + diphosphate + H(+). The chain is Histidine--tRNA ligase 1 from Bacillus anthracis.